The sequence spans 318 residues: MLLGQKSQRYKAEEGLQAQGEAPGLMDVQIPTAEEQKAASSSSTLIMGTLEEVTDSGSPSPPQSPEGASSSLTVTDSTLWSQSDEGSSSNEEEGPSTSPDPAHLESLFREALDEKVAELVRFLLRKYQIKEPVTKAEMLESVIKNYKNHFPDIFSKASECMQVIFGIDVKEVDPAGHSYILVTCLGLSYDGLLGDDQSTPKTGLLIIVLGMILMEGSRAPEEAIWEALSVMGLYDGREHSVYWKLRKLLTQEWVQENYLEYRQAPGSDPVRYEFLWGPRALAETSYVKVLEHVVRVNARVRISYPSLHEEALGEEKGV.

The segment at 1-103 (MLLGQKSQRY…GPSTSPDPAH (103 aa)) is disordered. The MAGE domain occupies 112-311 (LDEKVAELVR…ISYPSLHEEA (200 aa)).

Expressed in many tumors of several types, such as melanoma, head and neck squamous cell carcinoma, lung carcinoma and breast carcinoma, but not in normal tissues except for testis and placenta.

Functionally, not known, though may play a role in embryonal development and tumor transformation or aspects of tumor progression. In Homo sapiens (Human), this protein is Melanoma-associated antigen 8 (MAGEA8).